Reading from the N-terminus, the 372-residue chain is Oxoglutarate-dependent flavonoid 7-O-demethylase 1 (372 aa).

Residues Gly221 to Pro321 enclose the Fe2OG dioxygenase domain. Residues His245, Asp247, and His302 each contribute to the Fe cation site. Residue Arg312 coordinates 2-oxoglutarate.

Belongs to the iron/ascorbate-dependent oxidoreductase family. Monomer. The cofactor is Fe(2+). L-ascorbate serves as cofactor. In terms of tissue distribution, accumulates in the trichomes of nevadensin-accumulating strains (e.g. cv. SD and cv. EMX-1) and in cv. SW (at protein level) but not in cv. MC.

It is found in the cytoplasm. The enzyme catalyses gardenin B + 2-oxoglutarate + O2 = nevadensin + formaldehyde + succinate + CO2 + H(+). It catalyses the reaction 8-hydroxysalvigenin + 2-oxoglutarate + O2 = pilosin + formaldehyde + succinate + CO2. It functions in the pathway flavonoid metabolism. Inhibited by prohexadione-calcium, a 2-oxoglutarate-dependent dioxygenase (2-ODD) inhibitor, thus leading to a decreased abundance of nevadensin (NEV) and absence of pilosin (PIL) production, but to the accumulation of gardenin B (GARD B) and 8-hydroxysalvigenin (8-OH-SALV). In terms of biological role, oxoglutarate-dependent dioxygenase (2-ODD) acting as a flavonoid 7-O-demethylase involved in the biosynthesis of polymethoxylated flavonoids natural products such as nevadensin and salvigenin, aroma compounds which contribute to the flavor of sweet basil, and exhibit pharmacological activities such as anti-allergic, anti-oxidant, antibacterial, anti-proliferative, and anti-inflammatory effects. Catalyzes the 7-O-demethylation of methoxylated flavones; mediates the conversion of 8-hydroxysalvigenin (8-OH-SALV) to pilosin (PIL) and of gardenin B (GARD B) to nevadensin (NEV). This Ocimum basilicum (Sweet basil) protein is Oxoglutarate-dependent flavonoid 7-O-demethylase 1.